A 357-amino-acid polypeptide reads, in one-letter code: Cytoplasmic tRNA 2-thiolation protein 1 (357 aa).

A disordered region spans residues 314 to 348 (GVSRTRGRRGEKAGLHPDVGRGGGGGSSGPAEVAS). Positions 321 to 332 (RRGEKAGLHPDV) are enriched in basic and acidic residues.

This sequence belongs to the TtcA family. CTU1/NCS6/ATPBD3 subfamily.

It is found in the cytoplasm. It functions in the pathway tRNA modification; 5-methoxycarbonylmethyl-2-thiouridine-tRNA biosynthesis. In terms of biological role, plays a central role in 2-thiolation of mcm(5)S(2)U at tRNA wobble positions of tRNA(Lys), tRNA(Glu) and tRNA(Gln). Directly binds tRNAs and probably acts by catalyzing adenylation of tRNAs, an intermediate required for 2-thiolation. It is unclear whether it acts as a sulfurtransferase that transfers sulfur from thiocarboxylated URM1 onto the uridine of tRNAs at wobble position. This is Cytoplasmic tRNA 2-thiolation protein 1 from Chlamydomonas reinhardtii (Chlamydomonas smithii).